The primary structure comprises 350 residues: MTTAVARLQPSASGAKTRPVFPFSAIVGQEDMKLALLLTAVDPGIGGVLVFGDRGTGKSTAVRALAALLPEIEAVEGCPVSSPNVEMIPDWATVLSTNVIRKPTPVVDLPLGVSEDRVVGALDIERAISKGEKAFEPGLLARANRGYLYIDECNLLEDHIVDLLLDVAQSGENVVERDGLSIRHPARFVLVGSGNPEEGDLRPQLLDRFGLSVEVLSPRDVETRVEVIRRRDTYDADPKAFLEEWRPKDMDIRNQILEARERLPKVEAPNTALYDCAALCIALGSDGLRGELTLLRSARALAALEGATAVGRDHLKRVATMALSHRLRRDPLDEAGSTARVARTVEETLP.

52–59 (GDRGTGKS) is an ATP binding site.

This sequence belongs to the Mg-chelatase subunits D/I family.

It catalyses the reaction protoporphyrin IX + Mg(2+) + ATP + H2O = Mg-protoporphyrin IX + ADP + phosphate + 3 H(+). The protein operates within porphyrin-containing compound metabolism; bacteriochlorophyll biosynthesis. In terms of biological role, involved in bacteriochlorophyll biosynthesis; introduces a magnesium ion into protoporphyrin IX to yield Mg-protoporphyrin IX. This is Magnesium-chelatase 38 kDa subunit (bchI) from Rhodobacter capsulatus (strain ATCC BAA-309 / NBRC 16581 / SB1003).